We begin with the raw amino-acid sequence, 207 residues long: MDRLLVLVRHGQSDWNLKNLFTGWKDPDLTEKGIGEAQAAGRGLKAKGLAFDIAFTSALTRAQHTLKLILGELGTPDVPTTREQALNERDYGDLSGLNKDDARQKWGEEQVHVWRRSYDISPPGGESLKDTVARVLPYYCQSILPAVLDGKKTIVAAHGNSLRALVMVLDGLTPETIPSMELETGVPLIYRLRANSTVESKEVLKLG.

Substrate contacts are provided by residues 9–16 (RHGQSDWN), 22–23 (TG), Arg61, 88–91 (ERDY), Lys99, 115–116 (RR), and 159–160 (GN). The active-site Tele-phosphohistidine intermediate is the His10. Glu88 serves as the catalytic Proton donor/acceptor.

Belongs to the phosphoglycerate mutase family. BPG-dependent PGAM subfamily. In terms of assembly, homodimer.

It carries out the reaction (2R)-2-phosphoglycerate = (2R)-3-phosphoglycerate. It functions in the pathway carbohydrate degradation; glycolysis; pyruvate from D-glyceraldehyde 3-phosphate: step 3/5. Functionally, catalyzes the interconversion of 2-phosphoglycerate and 3-phosphoglycerate. This Beijerinckia indica subsp. indica (strain ATCC 9039 / DSM 1715 / NCIMB 8712) protein is 2,3-bisphosphoglycerate-dependent phosphoglycerate mutase.